We begin with the raw amino-acid sequence, 1377 residues long: DNA-directed RNA polymerase subunit beta (1377 aa).

Belongs to the RNA polymerase beta chain family. As to quaternary structure, the RNAP catalytic core consists of 2 alpha, 1 beta, 1 beta' and 1 omega subunit. When a sigma factor is associated with the core the holoenzyme is formed, which can initiate transcription.

The enzyme catalyses RNA(n) + a ribonucleoside 5'-triphosphate = RNA(n+1) + diphosphate. Its function is as follows. DNA-dependent RNA polymerase catalyzes the transcription of DNA into RNA using the four ribonucleoside triphosphates as substrates. This chain is DNA-directed RNA polymerase subunit beta, found in Brucella canis (strain ATCC 23365 / NCTC 10854 / RM-666).